We begin with the raw amino-acid sequence, 134 residues long: Small ribosomal subunit protein uS9 (134 aa).

The disordered stretch occupies residues 109-134 (DARRTEPHKPSKSSKGPRAKRQKSYR). A compositionally biased stretch (basic residues) spans 118–134 (PSKSSKGPRAKRQKSYR).

Belongs to the universal ribosomal protein uS9 family.

In Methanococcus maripaludis (strain C7 / ATCC BAA-1331), this protein is Small ribosomal subunit protein uS9.